Here is a 438-residue protein sequence, read N- to C-terminus: Histidinol dehydrogenase (438 aa).

Y135, Q193, and N216 together coordinate NAD(+). Substrate is bound by residues S243, Q265, and H268. Residues Q265 and H268 each contribute to the Zn(2+) site. Catalysis depends on proton acceptor residues E332 and H333. Substrate-binding residues include H333, D366, E420, and H425. A Zn(2+)-binding site is contributed by D366. Residue H425 participates in Zn(2+) binding.

It belongs to the histidinol dehydrogenase family. The cofactor is Zn(2+).

The catalysed reaction is L-histidinol + 2 NAD(+) + H2O = L-histidine + 2 NADH + 3 H(+). It participates in amino-acid biosynthesis; L-histidine biosynthesis; L-histidine from 5-phospho-alpha-D-ribose 1-diphosphate: step 9/9. In terms of biological role, catalyzes the sequential NAD-dependent oxidations of L-histidinol to L-histidinaldehyde and then to L-histidine. The chain is Histidinol dehydrogenase from Shewanella oneidensis (strain ATCC 700550 / JCM 31522 / CIP 106686 / LMG 19005 / NCIMB 14063 / MR-1).